We begin with the raw amino-acid sequence, 61 residues long: U-poneritoxin(01)-Om5b (61 aa).

A signal peptide spans 1–23 (MKLSALSLAFAIILMMTIMYTKA). Positions 24–41 (DADASADAEADADAEAEA) are excised as a propeptide. Gln59 carries the glutamine amide modification.

This sequence belongs to the formicidae venom precursor-01 superfamily. In terms of processing, truncated sequences of this peptide have also been found in the venom. It is possible they have been cleaved in the venom. As to expression, expressed by the venom gland.

It localises to the secreted. In terms of biological role, acidic peptide with potent hemolytic activities. It also shows low antimicrobial activities against E.coli (MIC=50uM), as well as histamine-releasing activity (28.3% at 10 uM). Does not have activity against S.aureus, and S.cerevisiae. The chain is U-poneritoxin(01)-Om5b from Odontomachus monticola (Trap-jaw ant).